A 176-amino-acid chain; its full sequence is NADH-quinone oxidoreductase subunit I 1 (176 aa).

2 consecutive 4Fe-4S ferredoxin-type domains span residues 45–77 and 87–116; these read IVLT…MEAT and RWFR…MTPD. The [4Fe-4S] cluster site is built by cysteine 57, cysteine 60, cysteine 63, cysteine 67, cysteine 96, cysteine 99, cysteine 102, and cysteine 106.

This sequence belongs to the complex I 23 kDa subunit family. NDH-1 is composed of 14 different subunits. Subunits NuoA, H, J, K, L, M, N constitute the membrane sector of the complex. [4Fe-4S] cluster serves as cofactor.

It localises to the cell inner membrane. It catalyses the reaction a quinone + NADH + 5 H(+)(in) = a quinol + NAD(+) + 4 H(+)(out). NDH-1 shuttles electrons from NADH, via FMN and iron-sulfur (Fe-S) centers, to quinones in the respiratory chain. The immediate electron acceptor for the enzyme in this species is believed to be ubiquinone. Couples the redox reaction to proton translocation (for every two electrons transferred, four hydrogen ions are translocated across the cytoplasmic membrane), and thus conserves the redox energy in a proton gradient. The protein is NADH-quinone oxidoreductase subunit I 1 of Geobacter metallireducens (strain ATCC 53774 / DSM 7210 / GS-15).